The following is a 186-amino-acid chain: MQQNIIKIKVGSKNPVKINAATKAMAQLFPDSIIDASGMDAPSGVAAQPMTDKDTRQGAINRVHYCQQQDQQDTQADYYFAMEGGVDCFDFGPATFAYIAIGHKDQLAIGRSAILPLPMQVYRALEAGEELGHVMDRLFNTVNIKQKGGAIGLLTHGHATRESNYTQAIILAMAPLLNPDIYAQTC.

Gln-75 lines the Mg(2+) pocket.

This sequence belongs to the YjjX NTPase family. As to quaternary structure, homodimer. The cofactor is Mg(2+). Mn(2+) serves as cofactor.

The catalysed reaction is XTP + H2O = XDP + phosphate + H(+). It carries out the reaction ITP + H2O = IDP + phosphate + H(+). Functionally, phosphatase that hydrolyzes non-canonical purine nucleotides such as XTP and ITP to their respective diphosphate derivatives. Probably excludes non-canonical purines from DNA/RNA precursor pool, thus preventing their incorporation into DNA/RNA and avoiding chromosomal lesions. This is Inosine/xanthosine triphosphatase from Shewanella baltica (strain OS185).